Consider the following 119-residue polypeptide: Large ribosomal subunit protein uL18 (119 aa).

It belongs to the universal ribosomal protein uL18 family. In terms of assembly, part of the 50S ribosomal subunit; part of the 5S rRNA/L5/L18/L25 subcomplex. Contacts the 5S and 23S rRNAs.

Its function is as follows. This is one of the proteins that bind and probably mediate the attachment of the 5S RNA into the large ribosomal subunit, where it forms part of the central protuberance. The sequence is that of Large ribosomal subunit protein uL18 from Dinoroseobacter shibae (strain DSM 16493 / NCIMB 14021 / DFL 12).